The chain runs to 356 residues: Red-sensitive opsin-2 (356 aa).

Topologically, residues 1-48 are extracellular; that stretch reads MAEWANAAFAARRRGDETTRDNAFSYTNSNNTRDPFEGPNYHIAPRWV. N-linked (GlcNAc...) asparagine glycosylation occurs at N30. The chain crosses the membrane as a helical span at residues 49–73; the sequence is YNVATVWMFFVVVASTFTNGLVLVA. The Cytoplasmic segment spans residues 74–85; it reads TAKFKKLRHPLN. A helical transmembrane segment spans residues 86 to 111; sequence WILVNLAIADLGETLFASTISVINQV. The Extracellular portion of the chain corresponds to 112 to 125; it reads FGYFILGHPMCIFE. A disulfide bridge connects residues C122 and C199. The helical transmembrane segment at 126–145 threads the bilayer; the sequence is GYTVSVCGIAGLWSLTVISW. Topologically, residues 146–164 are cytoplasmic; the sequence is ERWVVVCKPFGNVKFDGKW. The chain crosses the membrane as a helical span at residues 165-188; sequence ASAGIIFSWVWAAVWCAPPIFGWS. Topologically, residues 189-214 are extracellular; sequence RYWPHGLKTSCGPDVFGGNEDPGVQS. The chain crosses the membrane as a helical span at residues 215–242; that stretch reads YMLVLMITCCILPLAIIILCYIAVFLAI. Residues 243-264 are Cytoplasmic-facing; the sequence is HAVAQQQKDSESTQKAEKEVSR. The helical transmembrane segment at 265-288 threads the bilayer; it reads MVVVMILAFCLCWGPYTAFACFAA. Residues 289–296 lie on the Extracellular side of the membrane; the sequence is ANPGYAFH. The helical transmembrane segment at 297–321 threads the bilayer; that stretch reads PLAAAMPAYFAKSATIYNPIIYVFM. K308 is subject to N6-(retinylidene)lysine. Topologically, residues 322-356 are cytoplasmic; that stretch reads NRQFRVCIMQLFGKKVDDGSEVSTSKTEVSSVAPA.

The protein belongs to the G-protein coupled receptor 1 family. Opsin subfamily. Phosphorylated on some or all of the serine and threonine residues present in the C-terminal region.

The protein localises to the membrane. In terms of biological role, visual pigments are the light-absorbing molecules that mediate vision. They consist of an apoprotein, opsin, covalently linked to cis-retinal. The chain is Red-sensitive opsin-2 (opn1lw2) from Danio rerio (Zebrafish).